The following is a 43-amino-acid chain: Iota-conotoxin-like S11.2 (43 aa).

Intrachain disulfides connect Cys-2–Cys-16, Cys-9–Cys-19, Cys-15–Cys-24, and Cys-18–Cys-35. Met-41 is subject to D-methionine. A propeptide (removed by a carboxypeptidase) is located at residue Arg-43.

It belongs to the conotoxin I1 superfamily. As to expression, expressed by the venom duct.

The protein localises to the secreted. Its function is as follows. Iota-conotoxins bind to voltage-gated sodium channels (Nav) and act as agonists by shifting the voltage-dependence of activation to more hyperpolarized levels. Produces general excitatory symptoms. The polypeptide is Iota-conotoxin-like S11.2 (Conus striatus (Striated cone)).